Reading from the N-terminus, the 109-residue chain is Nucleoid-associated protein Sama_1311 (109 aa).

This sequence belongs to the YbaB/EbfC family. In terms of assembly, homodimer.

The protein localises to the cytoplasm. It is found in the nucleoid. Functionally, binds to DNA and alters its conformation. May be involved in regulation of gene expression, nucleoid organization and DNA protection. This is Nucleoid-associated protein Sama_1311 from Shewanella amazonensis (strain ATCC BAA-1098 / SB2B).